A 244-amino-acid polypeptide reads, in one-letter code: MKIDLNADLGEGCASDAELLTLVSSANIACGFHAGDAQTMQACVREAIKNGVAIGAHPSFPDRENFGRSAMQLPPETVFAQTLYQIGALAAITRAQGGVMCHVKPHGMLYNQAAKEAQLADAIARAVYACDPALILVGLAGSELIRAGERYGLVTREEVFADRGYQADGSLVPRSQPGALIENEEQALAQTLEMVQYGRVKSITGEWAMVTAQTVCLHGDGEHALAFARRLRATFAEKGIVVAA.

The protein belongs to the LamB/PxpA family. As to quaternary structure, forms a complex composed of PxpA, PxpB and PxpC.

It carries out the reaction 5-oxo-L-proline + ATP + 2 H2O = L-glutamate + ADP + phosphate + H(+). In terms of biological role, catalyzes the cleavage of 5-oxoproline to form L-glutamate coupled to the hydrolysis of ATP to ADP and inorganic phosphate. The polypeptide is 5-oxoprolinase subunit A (Escherichia coli O6:K15:H31 (strain 536 / UPEC)).